We begin with the raw amino-acid sequence, 336 residues long: MSSAVPLNVGITRSADSGASRADGEKRVLLAEPRGYCAGVDRAVETVEKALEKHGAPIYVRKEIVHNRHVVDTLTDQGVVFVDETDEVPEGALLVFSAHGVSPAVHESAAARNLRTIDATCPLVTKVHQEAKRFARDDFDILLIGHEGHEEVEGTAGEAPDHVQLVDGPDSVDAVTVRDESKVIWLSQTTLSVDETMQTVARLRERFPNLQDPPSDDICYATQNRQVAVKAMAPECDLVIVVGSRNSSNSVRLVEVALNAGAKASYLVDYAREVDPAWLDGVRTVGITSGASVPEILVRGVIDLLDEHGFHDVQPVTTANETLVFALPRELRAART.

Cys37 lines the [4Fe-4S] cluster pocket. (2E)-4-hydroxy-3-methylbut-2-enyl diphosphate contacts are provided by His66 and His99. Dimethylallyl diphosphate contacts are provided by His66 and His99. Positions 66 and 99 each coordinate isopentenyl diphosphate. Cys121 serves as a coordination point for [4Fe-4S] cluster. His149 contributes to the (2E)-4-hydroxy-3-methylbut-2-enyl diphosphate binding site. Dimethylallyl diphosphate is bound at residue His149. Residue His149 participates in isopentenyl diphosphate binding. The active-site Proton donor is Glu151. Thr189 serves as a coordination point for (2E)-4-hydroxy-3-methylbut-2-enyl diphosphate. Residue Cys219 coordinates [4Fe-4S] cluster. (2E)-4-hydroxy-3-methylbut-2-enyl diphosphate-binding residues include Ser247, Ser248, Asn249, and Ser292. Dimethylallyl diphosphate contacts are provided by Ser247, Ser248, Asn249, and Ser292. The isopentenyl diphosphate site is built by Ser247, Ser248, Asn249, and Ser292.

It belongs to the IspH family. [4Fe-4S] cluster serves as cofactor.

The enzyme catalyses isopentenyl diphosphate + 2 oxidized [2Fe-2S]-[ferredoxin] + H2O = (2E)-4-hydroxy-3-methylbut-2-enyl diphosphate + 2 reduced [2Fe-2S]-[ferredoxin] + 2 H(+). It carries out the reaction dimethylallyl diphosphate + 2 oxidized [2Fe-2S]-[ferredoxin] + H2O = (2E)-4-hydroxy-3-methylbut-2-enyl diphosphate + 2 reduced [2Fe-2S]-[ferredoxin] + 2 H(+). It participates in isoprenoid biosynthesis; dimethylallyl diphosphate biosynthesis; dimethylallyl diphosphate from (2E)-4-hydroxy-3-methylbutenyl diphosphate: step 1/1. It functions in the pathway isoprenoid biosynthesis; isopentenyl diphosphate biosynthesis via DXP pathway; isopentenyl diphosphate from 1-deoxy-D-xylulose 5-phosphate: step 6/6. Its function is as follows. Catalyzes the conversion of 1-hydroxy-2-methyl-2-(E)-butenyl 4-diphosphate (HMBPP) into a mixture of isopentenyl diphosphate (IPP) and dimethylallyl diphosphate (DMAPP). Acts in the terminal step of the DOXP/MEP pathway for isoprenoid precursor biosynthesis. This is 4-hydroxy-3-methylbut-2-enyl diphosphate reductase from Rhodococcus jostii (strain RHA1).